We begin with the raw amino-acid sequence, 159 residues long: Nanos homolog 3 (159 aa).

Residues 42 to 87 form a disordered region; the sequence is QEMQSDADSDEQAAALLESPSGPIRSRDSPEQNTSPGGGKPKSSPA. The Nanos-type zinc-finger motif lies at 91–145; the sequence is FCSFCKHNGETEAVYTSHYLKNRDGDVMCPYLRQYKCPLCGATGAKAHTKRFCPM. Positions 92, 95, 108, 119, 127, 130, 138, and 143 each coordinate Zn(2+). 2 consecutive short sequence motifs (C2HC) follow at residues 92 to 119 and 127 to 143; these read CSFCKHNGETEAVYTSHYLKNRDGDVMC and CPLCGATGAKAHTKRFC. Residues 92–159 form an interaction with mylpfa region; the sequence is CSFCKHNGET…YCSVYAKSTW (68 aa).

The protein belongs to the nanos family. Interacts (via C-terminus) with myosin mylpfa/mylz2; the interaction negatively regulates mylpfa phosphorylation. In terms of tissue distribution, in the embryo, displays early ubiquitous expression before being restricted to primordial germ cells in a 3'-UTR-dependent manner. Expressed in early stage germ cells in larval and adult ovaries.

Its subcellular location is the cytoplasm. The protein resides in the perinuclear region. RNA-binding protein which binds to RNA with no sequence specificity. Probably represses translation of specific mRNAs. Essential for the development of primordial germ cells (PGCs) by ensuring their proper migration and survival but is not required for PGC specification. Also required to maintain oocyte production in the adult ovary. Negatively regulates phosphorylation of myosin mylpfa/mylz2. This is Nanos homolog 3 from Danio rerio (Zebrafish).